The chain runs to 490 residues: Beta-N-acetyl-D-glucosaminide beta-1,4-N-acetylglucosaminyl-transferase (490 aa).

Residues 1–30 (MYLVVCWGRVTGNMISTRHCFSRCKSRSVR) are Cytoplasmic-facing. The chain crosses the membrane as a helical; Signal-anchor for type II membrane protein span at residues 31 to 50 (VIKATAMLFVAAMLFLALHM). N-linked (GlcNAc...) asparagine glycans are attached at residues N51, N82, N441, N459, and N485. The Lumenal segment spans residues 51 to 490 (NFSHEASQQN…YLTGNFTIIS (440 aa)).

The protein belongs to the glycosyltransferase 7 family.

The protein localises to the golgi apparatus membrane. The enzyme catalyses an N-acetyl-beta-D-glucosaminyl derivative + UDP-N-acetyl-alpha-D-glucosamine = an N-acetyl-beta-D-glucosaminyl-(1-&gt;4)-N-acetyl-beta-D-glucosaminyl derivative + UDP + H(+). Its pathway is protein modification; protein glycosylation. The protein is Beta-N-acetyl-D-glucosaminide beta-1,4-N-acetylglucosaminyl-transferase (GNT) of Lymnaea stagnalis (Great pond snail).